The sequence spans 425 residues: MSVTVVLGAQWGDEGKGKLADILAHESQICCRAQGGNNAGHTIVANGVTYDFHILPSGLVNPNCINVIGSGCVVHVPSFFKELEALEKHGLNTEGRIYISDRAHVVFDVHQQVDGLEEVELGQGFIGTTKKGIGPTYSTKMTRSGLRMCDLFDEEVFEQKLGRVVMGFQKRFGDLLQYDMQAEIEKYKGLREKLAPYVVDQIPLLASAKEKNAKILVEGANALMLDIDYGTYPFVTSSNTGLGGVLTGLTLGWRSLREVIGVVKAYTTRVGSGPFPTEQLNEFGEKLQSVGHEVGVTTGRKRRCGWLDLVVVKHSHACNDYTALNLTKLDVLDDFDELKVATSYSLNGQRLEGFPSNPDMLAQVEVQYETLPGWKKPTTGAKSYMDLPLAARKYVEYIENFVGVKVKWIGVGPARDHMISRSGNI.

Residues 12-18 and 40-42 each bind GTP; these read GDEGKGK and GHT. Asp13 serves as the catalytic Proton acceptor. 2 residues coordinate Mg(2+): Asp13 and Gly40. IMP-binding positions include 13-16, 38-41, Thr129, Arg143, Asn221, Thr236, and Arg300; these read DEGK and NAGH. The active-site Proton donor is the His41. Substrate is bound at residue 296–302; it reads VTTGRKR. GTP is bound by residues Arg302, 328 to 330, and 410 to 412; these read KLD and GVG.

It belongs to the adenylosuccinate synthetase family. As to quaternary structure, homodimer. Mg(2+) serves as cofactor.

It localises to the cytoplasm. It carries out the reaction IMP + L-aspartate + GTP = N(6)-(1,2-dicarboxyethyl)-AMP + GDP + phosphate + 2 H(+). It participates in purine metabolism; AMP biosynthesis via de novo pathway; AMP from IMP: step 1/2. Plays an important role in the de novo pathway and in the salvage pathway of purine nucleotide biosynthesis. Catalyzes the first committed step in the biosynthesis of AMP from IMP. The protein is Adenylosuccinate synthetase of Phaeosphaeria nodorum (strain SN15 / ATCC MYA-4574 / FGSC 10173) (Glume blotch fungus).